Reading from the N-terminus, the 670-residue chain is DNA mismatch repair protein MutL (670 aa).

Residues S363–H451 are disordered. Positions E379 to A389 are enriched in basic and acidic residues.

It belongs to the DNA mismatch repair MutL/HexB family.

Functionally, this protein is involved in the repair of mismatches in DNA. It is required for dam-dependent methyl-directed DNA mismatch repair. May act as a 'molecular matchmaker', a protein that promotes the formation of a stable complex between two or more DNA-binding proteins in an ATP-dependent manner without itself being part of a final effector complex. This is DNA mismatch repair protein MutL from Syntrophobacter fumaroxidans (strain DSM 10017 / MPOB).